Reading from the N-terminus, the 148-residue chain is Transcriptional regulator MraZ (148 aa).

2 SpoVT-AbrB domains span residues 5–51 (AAAL…PSPA) and 80–123 (ARTE…SEAG).

It belongs to the MraZ family. As to quaternary structure, forms oligomers.

The protein resides in the cytoplasm. It is found in the nucleoid. The sequence is that of Transcriptional regulator MraZ from Dechloromonas aromatica (strain RCB).